The sequence spans 414 residues: Imidazolonepropionase (414 aa).

Positions Met-1 to Pro-20 are enriched in polar residues. The tract at residues Met-1–Gln-26 is disordered. Fe(3+)-binding residues include His-81 and His-83. Positions 81 and 83 each coordinate Zn(2+). The 4-imidazolone-5-propanoate site is built by Arg-90, Tyr-153, and His-186. N-formimidoyl-L-glutamate is bound at residue Tyr-153. His-251 contacts Fe(3+). Residue His-251 participates in Zn(2+) binding. Glu-254 is a binding site for 4-imidazolone-5-propanoate. Residue Asp-325 participates in Fe(3+) binding. A Zn(2+)-binding site is contributed by Asp-325. Residues Asn-327 and Gly-329 each contribute to the N-formimidoyl-L-glutamate site. Ser-330 provides a ligand contact to 4-imidazolone-5-propanoate.

Belongs to the metallo-dependent hydrolases superfamily. HutI family. Zn(2+) is required as a cofactor. It depends on Fe(3+) as a cofactor.

It localises to the cytoplasm. The enzyme catalyses 4-imidazolone-5-propanoate + H2O = N-formimidoyl-L-glutamate. It participates in amino-acid degradation; L-histidine degradation into L-glutamate; N-formimidoyl-L-glutamate from L-histidine: step 3/3. In terms of biological role, catalyzes the hydrolytic cleavage of the carbon-nitrogen bond in imidazolone-5-propanoate to yield N-formimidoyl-L-glutamate. It is the third step in the universal histidine degradation pathway. The sequence is that of Imidazolonepropionase from Desulfotalea psychrophila (strain LSv54 / DSM 12343).